The primary structure comprises 292 residues: 2-(5''-triphosphoribosyl)-3'-dephosphocoenzyme-A synthase (292 aa).

It belongs to the CitG/MdcB family.

It carries out the reaction 3'-dephospho-CoA + ATP = 2'-(5''-triphospho-alpha-D-ribosyl)-3'-dephospho-CoA + adenine. Functionally, catalyzes the formation of 2-(5''-triphosphoribosyl)-3'-dephosphocoenzyme-A, the precursor of the prosthetic group of the holo-acyl carrier protein (gamma chain) of citrate lyase, from ATP and dephospho-CoA. This Escherichia coli (strain UTI89 / UPEC) protein is 2-(5''-triphosphoribosyl)-3'-dephosphocoenzyme-A synthase.